We begin with the raw amino-acid sequence, 330 residues long: tRNA pseudouridine synthase B (330 aa).

The active-site Nucleophile is Asp-42.

It belongs to the pseudouridine synthase TruB family. Type 1 subfamily.

The enzyme catalyses uridine(55) in tRNA = pseudouridine(55) in tRNA. In terms of biological role, responsible for synthesis of pseudouridine from uracil-55 in the psi GC loop of transfer RNAs. This Lactococcus lactis subsp. cremoris (strain SK11) protein is tRNA pseudouridine synthase B.